The sequence spans 133 residues: Thioredoxin-2, mitochondrial (133 aa).

A mitochondrion-targeting transit peptide spans 1 to 29 (MRGFIANSLKPHMRSFALRRSFTSSRILR). Residues 30–133 (KVNAVESFGD…LSSLLAKYQE (104 aa)) enclose the Thioredoxin domain. Active-site nucleophile residues include cysteine 59 and cysteine 62. The cysteines at positions 59 and 62 are disulfide-linked.

The protein belongs to the thioredoxin family. In terms of assembly, interacts with arg3.

Its subcellular location is the mitochondrion. Disulfide reductase which serves multiple functions in mitochondria, protecting mitochondrial components against thiol-oxidative damage as a thiol-disulfide oxidoreductase, and supporting urea cycle and respiration in mitochondria in a manner independent of active site thiols. The chain is Thioredoxin-2, mitochondrial (trx2) from Schizosaccharomyces pombe (strain 972 / ATCC 24843) (Fission yeast).